A 205-amino-acid chain; its full sequence is Large ribosomal subunit protein uL18 (205 aa).

This sequence belongs to the universal ribosomal protein uL18 family. In terms of assembly, part of the 50S ribosomal subunit. Contacts the 5S and 23S rRNAs.

Functionally, this is one of the proteins that bind and probably mediate the attachment of the 5S RNA into the large ribosomal subunit, where it forms part of the central protuberance. The protein is Large ribosomal subunit protein uL18 of Pyrobaculum neutrophilum (strain DSM 2338 / JCM 9278 / NBRC 100436 / V24Sta) (Thermoproteus neutrophilus).